The sequence spans 382 residues: Lipid-A-disaccharide synthase (382 aa).

This sequence belongs to the LpxB family.

It carries out the reaction a lipid X + a UDP-2-N,3-O-bis[(3R)-3-hydroxyacyl]-alpha-D-glucosamine = a lipid A disaccharide + UDP + H(+). The protein operates within bacterial outer membrane biogenesis; LPS lipid A biosynthesis. In terms of biological role, condensation of UDP-2,3-diacylglucosamine and 2,3-diacylglucosamine-1-phosphate to form lipid A disaccharide, a precursor of lipid A, a phosphorylated glycolipid that anchors the lipopolysaccharide to the outer membrane of the cell. This Koribacter versatilis (strain Ellin345) protein is Lipid-A-disaccharide synthase.